The sequence spans 361 residues: 3-isopropylmalate dehydrogenase (361 aa).

NAD(+) is bound at residue 78–91 (GTQWDSLPRHLRPE). Substrate is bound by residues Arg-98, Arg-108, Arg-136, and Asp-226. 3 residues coordinate Mg(2+): Asp-226, Asp-250, and Asp-254. 284–296 (GSAPDIAGQDKAN) contacts NAD(+).

The protein belongs to the isocitrate and isopropylmalate dehydrogenases family. LeuB type 1 subfamily. In terms of assembly, homodimer. It depends on Mg(2+) as a cofactor. Mn(2+) is required as a cofactor.

The protein resides in the cytoplasm. The enzyme catalyses (2R,3S)-3-isopropylmalate + NAD(+) = 4-methyl-2-oxopentanoate + CO2 + NADH. It functions in the pathway amino-acid biosynthesis; L-leucine biosynthesis; L-leucine from 3-methyl-2-oxobutanoate: step 3/4. In terms of biological role, catalyzes the oxidation of 3-carboxy-2-hydroxy-4-methylpentanoate (3-isopropylmalate) to 3-carboxy-4-methyl-2-oxopentanoate. The product decarboxylates to 4-methyl-2 oxopentanoate. The protein is 3-isopropylmalate dehydrogenase of Thermosynechococcus vestitus (strain NIES-2133 / IAM M-273 / BP-1).